We begin with the raw amino-acid sequence, 710 residues long: E3 ubiquitin-protein ligase TRIM9 (710 aa).

Residues 10 to 50 form an RING-type zinc finger; the sequence is CPVCGSFYREPIILPCSHNICQACARNILVQTPESESPQSR. At Thr41 the chain carries Phosphothreonine. Ser44, Ser46, Ser49, and Ser53 each carry phosphoserine. 2 consecutive B box-type zinc fingers follow at residues 163–212 and 224–266; these read AAAL…LVPP and RKVS…VKAL. Residues Cys168, Cys171, Cys193, His198, Cys229, His232, Cys252, and His258 each coordinate Zn(2+). A coiled-coil region spans residues 273-340; that stretch reads HKSQLSQALN…KAQLLARVNK (68 aa). In terms of domain architecture, COS spans 374-432; sequence IKENDPSGFLQISDALIRRVHLTEDQWGKGTLTPRMTTDFDLSLDNSPLLQSIHQLDFV. Residues 440–535 enclose the Fibronectin type-III domain; it reads VPATPILQLE…KTLVLQTSEV (96 aa). Residues 533–702 enclose the B30.2/SPRY domain; the sequence is SEVAWFAFDP…LHTGLQVPDF (170 aa).

It belongs to the TRIM/RBCC family. As to quaternary structure, interacts with SNAP25. Auto-ubiquitinated.

The protein resides in the cytoplasm. It localises to the cell projection. Its subcellular location is the dendrite. The protein localises to the cytoplasmic vesicle. It is found in the secretory vesicle. The protein resides in the synaptic vesicle. It localises to the synapse. Its subcellular location is the cytoskeleton. The catalysed reaction is S-ubiquitinyl-[E2 ubiquitin-conjugating enzyme]-L-cysteine + [acceptor protein]-L-lysine = [E2 ubiquitin-conjugating enzyme]-L-cysteine + N(6)-ubiquitinyl-[acceptor protein]-L-lysine.. It participates in protein modification; protein ubiquitination. E3 ubiquitin-protein ligase which ubiquitinates itself in cooperation with an E2 enzyme UBE2D2/UBC4 and serves as a targeting signal for proteasomal degradation. May play a role in regulation of neuronal functions. May act as a regulator of synaptic vesicle exocytosis by controlling the availability of SNAP25 for the SNARE complex formation. This chain is E3 ubiquitin-protein ligase TRIM9 (TRIM9), found in Bos taurus (Bovine).